The primary structure comprises 131 residues: NADPH-dependent 7-cyano-7-deazaguanine reductase (131 aa).

Catalysis depends on cysteine 47, which acts as the Thioimide intermediate. The active-site Proton donor is the aspartate 54. Residues 69–71 (MEL) and 88–89 (HE) each bind substrate.

This sequence belongs to the GTP cyclohydrolase I family. QueF type 1 subfamily.

Its subcellular location is the cytoplasm. The enzyme catalyses 7-aminomethyl-7-carbaguanine + 2 NADP(+) = 7-cyano-7-deazaguanine + 2 NADPH + 3 H(+). Its pathway is tRNA modification; tRNA-queuosine biosynthesis. Its function is as follows. Catalyzes the NADPH-dependent reduction of 7-cyano-7-deazaguanine (preQ0) to 7-aminomethyl-7-deazaguanine (preQ1). The chain is NADPH-dependent 7-cyano-7-deazaguanine reductase from Microcystis aeruginosa (strain NIES-843 / IAM M-2473).